The following is a 75-amino-acid chain: Protein SlyX homolog (75 aa).

Belongs to the SlyX family.

In Vibrio campbellii (strain ATCC BAA-1116), this protein is Protein SlyX homolog.